A 208-amino-acid chain; its full sequence is Small ribosomal subunit protein uS4 (208 aa).

The 64-residue stretch at 97-160 (SRLDNIVFRL…KKNDKIAEAL (64 aa)) folds into the S4 RNA-binding domain.

It belongs to the universal ribosomal protein uS4 family. In terms of assembly, part of the 30S ribosomal subunit. Contacts protein S5. The interaction surface between S4 and S5 is involved in control of translational fidelity.

One of the primary rRNA binding proteins, it binds directly to 16S rRNA where it nucleates assembly of the body of the 30S subunit. Its function is as follows. With S5 and S12 plays an important role in translational accuracy. In Mesoplasma florum (strain ATCC 33453 / NBRC 100688 / NCTC 11704 / L1) (Acholeplasma florum), this protein is Small ribosomal subunit protein uS4.